We begin with the raw amino-acid sequence, 874 residues long: Alanine--tRNA ligase (874 aa).

4 residues coordinate Zn(2+): His562, His566, Cys665, and His669.

The protein belongs to the class-II aminoacyl-tRNA synthetase family. The cofactor is Zn(2+).

It is found in the cytoplasm. It catalyses the reaction tRNA(Ala) + L-alanine + ATP = L-alanyl-tRNA(Ala) + AMP + diphosphate. Its function is as follows. Catalyzes the attachment of alanine to tRNA(Ala) in a two-step reaction: alanine is first activated by ATP to form Ala-AMP and then transferred to the acceptor end of tRNA(Ala). Also edits incorrectly charged Ser-tRNA(Ala) and Gly-tRNA(Ala) via its editing domain. The polypeptide is Alanine--tRNA ligase (Pseudomonas putida (strain ATCC 47054 / DSM 6125 / CFBP 8728 / NCIMB 11950 / KT2440)).